Reading from the N-terminus, the 36-residue chain is GLIDVRCYASRECWEPCRKVTGSGQAKCQNNQCRCY.

Disulfide bonds link cysteine 7/cysteine 28, cysteine 13/cysteine 33, and cysteine 17/cysteine 35.

It belongs to the short scorpion toxin superfamily. Potassium channel inhibitor family. Alpha-KTx 16 subfamily. As to expression, expressed by the venom gland.

It is found in the secreted. Its function is as follows. Poorly competes with (125)I-kaliotoxin binding on rat brain synaptosome (IC(50)&gt;100 nM). Is a poor Kv1.3/KCNA3 ligand. May have as real target KCa1.1/KCNMA1 channel. Shows weak toxicity on mice. This chain is Potassium channel toxin alpha-KTx 16.9, found in Buthus paris (Scorpion).